We begin with the raw amino-acid sequence, 70 residues long: Small ribosomal subunit protein bS21 (70 aa).

It belongs to the bacterial ribosomal protein bS21 family.

The sequence is that of Small ribosomal subunit protein bS21 from Sulfurovum sp. (strain NBC37-1).